The sequence spans 1433 residues: Pleckstrin homology domain-containing family H member 1 (1433 aa).

A coiled-coil region spans residues 40–174 (NIRHLLAERM…QILMLQDKLQ (135 aa)). Disordered stretches follow at residues 247–346 (DKAD…LSPP) and 552–634 (SSVP…TSSY). Residues 252-266 (PKSSQDGVDATSTVK) are compositionally biased toward polar residues. Residues 279–299 (MRDRAMGGASDRDHSSDELNS) are compositionally biased toward basic and acidic residues. Positions 308 to 318 (SSSSSSSSSSS) are enriched in low complexity. The segment covering 332-343 (TPTPKSPPPVSL) has biased composition (pro residues). The span at 557 to 567 (PDDDSGSEDDS) shows a compositional bias: acidic residues. Residues 568 to 578 (SSLASLHTSTL) show a composition bias toward low complexity. Positions 597-606 (VSTSSISSES) are enriched in polar residues. PH domains are found at residues 643 to 737 (TLEK…NVLK) and 751 to 859 (KPTA…VAAG). The region spanning 896-1050 (FSKEGLRYPL…PSRMEILSIL (155 aa)) is the MyTH4 domain. The FERM domain occupies 1061–1392 (FSIPVHFMNN…SYINYWTSSL (332 aa)).

Its function is as follows. Critical component of the guidance pathway underlying endothelial cell migration and blood vessel patterning. Involved in mediating membrane localization of ephrin proteins, which have been shown to provide guidance cues for endothelial cell migration. This Danio rerio (Zebrafish) protein is Pleckstrin homology domain-containing family H member 1 (plekhh1).